The following is a 148-amino-acid chain: Large ribosomal subunit protein bL9 (148 aa).

Belongs to the bacterial ribosomal protein bL9 family.

Binds to the 23S rRNA. This chain is Large ribosomal subunit protein bL9, found in Pseudomonas syringae pv. tomato (strain ATCC BAA-871 / DC3000).